Consider the following 383-residue polypeptide: Sterol 24-C-methyltransferase ERG6 (383 aa).

S2 bears the N-acetylserine mark. S99 bears the Phosphoserine mark.

It belongs to the class I-like SAM-binding methyltransferase superfamily. Erg6/SMT family. As to quaternary structure, interacts with ERG28.

It is found in the microsome. The protein localises to the mitochondrion. The catalysed reaction is zymosterol + S-adenosyl-L-methionine = fecosterol + S-adenosyl-L-homocysteine + H(+). It participates in steroid metabolism; ergosterol biosynthesis; ergosterol from zymosterol: step 1/5. Sterol 24-C-methyltransferase; part of the third module of ergosterol biosynthesis pathway that includes the late steps of the pathway. ERG6 catalyzes the methyl transfer from S-adenosyl-methionine to the C-24 of zymosterol to form fecosterol. The third module or late pathway involves the ergosterol synthesis itself through consecutive reactions that mainly occur in the endoplasmic reticulum (ER) membrane. Firstly, the squalene synthase ERG9 catalyzes the condensation of 2 farnesyl pyrophosphate moieties to form squalene, which is the precursor of all steroids. Squalene synthase is crucial for balancing the incorporation of farnesyl diphosphate (FPP) into sterol and nonsterol isoprene synthesis. Secondly, the squalene epoxidase ERG1 catalyzes the stereospecific oxidation of squalene to (S)-2,3-epoxysqualene, which is considered to be a rate-limiting enzyme in steroid biosynthesis. Then, the lanosterol synthase ERG7 catalyzes the cyclization of (S)-2,3 oxidosqualene to lanosterol, a reaction that forms the sterol core. In the next steps, lanosterol is transformed to zymosterol through a complex process involving various demethylation, reduction and desaturation reactions. The lanosterol 14-alpha-demethylase ERG11 (also known as CYP51) catalyzes C14-demethylation of lanosterol to produce 4,4'-dimethyl cholesta-8,14,24-triene-3-beta-ol, which is critical for ergosterol biosynthesis. The C-14 reductase ERG24 reduces the C14=C15 double bond of 4,4-dimethyl-cholesta-8,14,24-trienol to produce 4,4-dimethyl-cholesta-8,24-dienol. 4,4-dimethyl-cholesta-8,24-dienol is substrate of the C-4 demethylation complex ERG25-ERG26-ERG27 in which ERG25 catalyzes the three-step monooxygenation required for the demethylation of 4,4-dimethyl and 4alpha-methylsterols, ERG26 catalyzes the oxidative decarboxylation that results in a reduction of the 3-beta-hydroxy group at the C-3 carbon to an oxo group, and ERG27 is responsible for the reduction of the keto group on the C-3. ERG28 has a role as a scaffold to help anchor ERG25, ERG26 and ERG27 to the endoplasmic reticulum and ERG29 regulates the activity of the iron-containing C4-methylsterol oxidase ERG25. Then, the sterol 24-C-methyltransferase ERG6 catalyzes the methyl transfer from S-adenosyl-methionine to the C-24 of zymosterol to form fecosterol. The C-8 sterol isomerase ERG2 catalyzes the reaction which results in unsaturation at C-7 in the B ring of sterols and thus converts fecosterol to episterol. The sterol-C5-desaturase ERG3 then catalyzes the introduction of a C-5 double bond in the B ring to produce 5-dehydroepisterol. The C-22 sterol desaturase ERG5 further converts 5-dehydroepisterol into ergosta-5,7,22,24(28)-tetraen-3beta-ol by forming the C-22(23) double bond in the sterol side chain. Finally, ergosta-5,7,22,24(28)-tetraen-3beta-ol is substrate of the C-24(28) sterol reductase ERG4 to produce ergosterol. This chain is Sterol 24-C-methyltransferase ERG6, found in Saccharomyces cerevisiae (strain ATCC 204508 / S288c) (Baker's yeast).